Here is a 322-residue protein sequence, read N- to C-terminus: MWEKVDQLTPSRYSPYRFFSAQEWAAFRADTPLTLTYEEVKRLRSLGDPIDLDEVRRIYLSLSRLLYAHVEASQLLFRQRQQFLNMEESYKTPFIIGVAGSVAVGKSTMARILKELLARWPSSPKVDLVTTDGFLYPNAVLREQNMMERKGFPESYDIGAVLRFLSAIKAGMSRVRAPLYSHLSYDVLPGEYQIVDKPDILIFEGINVLQVRDLPEDGKMVPFVSDFFDFSIYIDADPRLIHKWYIDRFMRLRETAFRDPQSFFHRYSQLSQEAARSIAEGLWQNINMKNLNENILPTRPRADLILRKGSDHLIEEVALRKI.

ATP is bound at residue 100–107 (GSVAVGKS).

Belongs to the prokaryotic pantothenate kinase family.

The protein localises to the cytoplasm. The enzyme catalyses (R)-pantothenate + ATP = (R)-4'-phosphopantothenate + ADP + H(+). It participates in cofactor biosynthesis; coenzyme A biosynthesis; CoA from (R)-pantothenate: step 1/5. The polypeptide is Pantothenate kinase (Brucella abortus (strain 2308)).